A 230-amino-acid polypeptide reads, in one-letter code: Protein UPS2, mitochondrial (230 aa).

The 175-residue stretch at 1–175 folds into the PRELI/MSF1 domain; the sequence is MKLFQNSYDF…VLQVFSENWE (175 aa).

The protein belongs to the slowmo family. As to quaternary structure, interacts with MDM35.

Its subcellular location is the mitochondrion inner membrane. It localises to the mitochondrion intermembrane space. Functionally, required for mitochondrial cristae morphogenesis and MGM1-processing. Controls the stability of mitochondrial phosphatidylethanolamine (PE). With UPS1, controls the level of cardiolipin in mitochondria. Cardiolipin is a unique phospholipid with four fatty acid chains and is present mainly in the mitochondrial inner membrane where it stabilizes the electron transport chain supercomplex between complexes III and IV through direct interaction of their subunits. The sequence is that of Protein UPS2, mitochondrial (UPS2) from Saccharomyces cerevisiae (strain ATCC 204508 / S288c) (Baker's yeast).